A 196-amino-acid chain; its full sequence is Adenosylcobinamide-phosphate guanylyltransferase (196 aa).

As to quaternary structure, homodimer.

It catalyses the reaction adenosylcob(III)inamide phosphate + GTP + H(+) = adenosylcob(III)inamide-GDP + diphosphate. Its pathway is cofactor biosynthesis; adenosylcobalamin biosynthesis. Functionally, guanylyltransferase that catalyzes the synthesis of adenosylcobinamide-GDP (AdoCbi-GDP) from adenosylcobinamide-phosphate (AdoCbi-P) and GTP. Is involved in adenosylcobalamin biosynthesis. Binds one GTP per dimer. Cannot use other NTPs or GDP. Does not display AdoCbi kinase activity. Is also able to catalyze the condensation of 2-phospho-L-lactate (LP) with GTP in vitro to form PPi and (2S)-lactyl-2-diphospho-5'-guanosine (LPPG), but is much less efficient than CofC, the presumed enzyme catalyzing this reaction in vivo. The polypeptide is Adenosylcobinamide-phosphate guanylyltransferase (cobY) (Methanocaldococcus jannaschii (strain ATCC 43067 / DSM 2661 / JAL-1 / JCM 10045 / NBRC 100440) (Methanococcus jannaschii)).